Here is a 424-residue protein sequence, read N- to C-terminus: GTPase Obg (424 aa).

Residues 1–159 (MVFIDTARIY…MWVRLELKLL (159 aa)) form the Obg domain. One can recognise an OBG-type G domain in the interval 160–330 (ADVGLVGFPN…LLDKTIEILS (171 aa)). GTP is bound by residues 166-173 (GFPNAGKS), 191-195 (FTTLT), 212-215 (DIPG), 282-285 (NKMD), and 311-313 (SAL). Ser-173 and Thr-193 together coordinate Mg(2+). One can recognise an OCT domain in the interval 347-424 (NPPEEEETLE…VRDFEFEYYE (78 aa)).

Belongs to the TRAFAC class OBG-HflX-like GTPase superfamily. OBG GTPase family. In terms of assembly, monomer. The cofactor is Mg(2+).

It is found in the cytoplasm. Its function is as follows. An essential GTPase which binds GTP, GDP and possibly (p)ppGpp with moderate affinity, with high nucleotide exchange rates and a fairly low GTP hydrolysis rate. Plays a role in control of the cell cycle, stress response, ribosome biogenesis and in those bacteria that undergo differentiation, in morphogenesis control. The sequence is that of GTPase Obg from Caldanaerobacter subterraneus subsp. tengcongensis (strain DSM 15242 / JCM 11007 / NBRC 100824 / MB4) (Thermoanaerobacter tengcongensis).